A 130-amino-acid polypeptide reads, in one-letter code: Small ribosomal subunit protein uS17m (130 aa).

The transit peptide at 1–20 (MSVVRSSVHARWIVGKVIGT) directs the protein to the mitochondrion.

Belongs to the universal ribosomal protein uS17 family. As to quaternary structure, component of the mitochondrial small ribosomal subunit (mt-SSU). Mature mammalian 55S mitochondrial ribosomes consist of a small (28S) and a large (39S) subunit. The 28S small subunit contains a 12S ribosomal RNA (12S mt-rRNA) and 30 different proteins. The 39S large subunit contains a 16S rRNA (16S mt-rRNA), a copy of mitochondrial valine transfer RNA (mt-tRNA(Val)), which plays an integral structural role, and 52 different proteins.

The protein resides in the mitochondrion. This chain is Small ribosomal subunit protein uS17m (MRPS17), found in Homo sapiens (Human).